Here is a 439-residue protein sequence, read N- to C-terminus: Proline--tRNA ligase (439 aa).

Belongs to the class-II aminoacyl-tRNA synthetase family. ProS type 2 subfamily. In terms of assembly, homodimer.

The protein localises to the cytoplasm. It carries out the reaction tRNA(Pro) + L-proline + ATP = L-prolyl-tRNA(Pro) + AMP + diphosphate. Catalyzes the attachment of proline to tRNA(Pro) in a two-step reaction: proline is first activated by ATP to form Pro-AMP and then transferred to the acceptor end of tRNA(Pro). The polypeptide is Proline--tRNA ligase (Rhodopseudomonas palustris (strain HaA2)).